We begin with the raw amino-acid sequence, 357 residues long: S-adenosylmethionine:tRNA ribosyltransferase-isomerase (357 aa).

Belongs to the QueA family. Monomer.

The protein resides in the cytoplasm. It carries out the reaction 7-aminomethyl-7-carbaguanosine(34) in tRNA + S-adenosyl-L-methionine = epoxyqueuosine(34) in tRNA + adenine + L-methionine + 2 H(+). The protein operates within tRNA modification; tRNA-queuosine biosynthesis. Its function is as follows. Transfers and isomerizes the ribose moiety from AdoMet to the 7-aminomethyl group of 7-deazaguanine (preQ1-tRNA) to give epoxyqueuosine (oQ-tRNA). This chain is S-adenosylmethionine:tRNA ribosyltransferase-isomerase, found in Hamiltonella defensa subsp. Acyrthosiphon pisum (strain 5AT).